The following is a 576-amino-acid chain: Potassium-transporting ATPase potassium-binding subunit (576 aa).

The next 12 helical transmembrane spans lie at 3–23 (IFLD…ISPI), 68–88 (LYAL…TLLF), 137–157 (GLAL…LVLI), 179–199 (ILYV…SQGV), 267–287 (FEAF…GYMI), 294–314 (WFLY…QYYF), 339–359 (FGIG…CGAV), 369–389 (LGGL…GGVG), 391–411 (GLYG…LMIG), 430–450 (VVIT…ALYT), 495–515 (ITTG…VFYM), and 537–557 (LVFG…TFLP).

It belongs to the KdpA family. In terms of assembly, the system is composed of three essential subunits: KdpA, KdpB and KdpC.

It localises to the cell inner membrane. Functionally, part of the high-affinity ATP-driven potassium transport (or Kdp) system, which catalyzes the hydrolysis of ATP coupled with the electrogenic transport of potassium into the cytoplasm. This subunit binds the periplasmic potassium ions and delivers the ions to the membrane domain of KdpB through an intramembrane tunnel. The polypeptide is Potassium-transporting ATPase potassium-binding subunit (Hydrogenobaculum sp. (strain Y04AAS1)).